The following is a 417-amino-acid chain: Tyrosine--tRNA ligase (417 aa).

Tyrosine 39 lines the L-tyrosine pocket. A 'HIGH' region motif is present at residues 44–53; sequence PTAPSLHAGG. Tyrosine 176 and glutamine 180 together coordinate L-tyrosine. A 'KMSKS' region motif is present at residues 236 to 240; the sequence is KMGKS. Lysine 239 serves as a coordination point for ATP. Positions 350-417 constitute an S4 RNA-binding domain; the sequence is IGVLALMVLA…KKRHVLIRPA (68 aa).

Belongs to the class-I aminoacyl-tRNA synthetase family. TyrS type 1 subfamily. Homodimer.

The protein resides in the cytoplasm. It carries out the reaction tRNA(Tyr) + L-tyrosine + ATP = L-tyrosyl-tRNA(Tyr) + AMP + diphosphate + H(+). Its function is as follows. Catalyzes the attachment of tyrosine to tRNA(Tyr) in a two-step reaction: tyrosine is first activated by ATP to form Tyr-AMP and then transferred to the acceptor end of tRNA(Tyr). This Brucella suis biovar 1 (strain 1330) protein is Tyrosine--tRNA ligase.